Here is a 349-residue protein sequence, read N- to C-terminus: Green-sensitive opsin-2 (349 aa).

Over 1–36 (MNGTEGNNFYVPLSNRTGLVRSPFEYPQYYLAEPWQ) the chain is Extracellular. N-linked (GlcNAc...) asparagine glycans are attached at residues N2 and N15. A helical transmembrane segment spans residues 37–61 (FKLLAVYMFFLICLGLPINGLTLIC). At 62 to 73 (TAQHKKLRQPLN) the chain is on the cytoplasmic side. Residues 74-99 (FILVNLAVAGAIMVCFGFTVTFYTAI) traverse the membrane as a helical segment. Topologically, residues 100–113 (NGYFALGPTGCAVE) are extracellular. An intrachain disulfide couples C110 to C187. Residues 114–133 (GFMATLGGEVALWSLVVLAI) traverse the membrane as a helical segment. Residues 134–152 (ERYIVVCKPMGSFKFSSTH) are Cytoplasmic-facing. Residues 153–176 (ASAGIAFTWVMAMACAAPPLVGWS) form a helical membrane-spanning segment. Residues 177 to 202 (RYIPEGIQCSCGPDYYTLNPEYNNES) are Extracellular-facing. A helical transmembrane segment spans residues 203 to 230 (YVLYMFICHFILPVTIIFFTYGRLVCTV). Residues 231 to 252 (KAAAAQQQDSASTQKAEREVTK) are Cytoplasmic-facing. The chain crosses the membrane as a helical span at residues 253-276 (MVILMVLGFLVAWTPYATVAAWIF). At 277–284 (FNKGAAFS) the chain is on the extracellular side. A helical transmembrane segment spans residues 285-309 (AQFMAIPAFFSKTSALYNPVIYVLL). K296 is modified (N6-(retinylidene)lysine). Residues 310–349 (NKQFRSCMLTTLFCGKNPLGDEESSTVSTSKTEVSSVSPA) are Cytoplasmic-facing. Positions 329 to 349 (GDEESSTVSTSKTEVSSVSPA) are disordered. Positions 334 to 349 (STVSTSKTEVSSVSPA) are enriched in low complexity.

It belongs to the G-protein coupled receptor 1 family. Opsin subfamily. Post-translationally, phosphorylated on some or all of the serine and threonine residues present in the C-terminal region. The color pigments are found in the cone photoreceptor cells.

The protein resides in the membrane. Its function is as follows. Visual pigments are the light-absorbing molecules that mediate vision. They consist of an apoprotein, opsin, covalently linked to cis-retinal. The polypeptide is Green-sensitive opsin-2 (Carassius auratus (Goldfish)).